The following is a 146-amino-acid chain: Large ribosomal subunit protein uL15 (146 aa).

Residues 1–13 (MKLHELKPAEGSR) show a composition bias toward basic and acidic residues. Residues 1–60 (MKLHELKPAEGSRKQRNRVGRGIGSGNGKTAGKGHKGQNARSGGGVRPGFEGGQNPLFRR) form a disordered region. 2 stretches are compositionally biased toward gly residues: residues 21–31 (RGIGSGNGKTA) and 42–52 (SGGGVRPGFEG).

The protein belongs to the universal ribosomal protein uL15 family. As to quaternary structure, part of the 50S ribosomal subunit.

Binds to the 23S rRNA. The polypeptide is Large ribosomal subunit protein uL15 (Lysinibacillus sphaericus (strain C3-41)).